The primary structure comprises 593 residues: NADH-quinone oxidoreductase subunit C/D (593 aa).

Positions 1–184 (MTADSVLSIP…DPYSLSAAKQ (184 aa)) are NADH dehydrogenase I subunit C. Residues 208-593 (DFMFLNLGPN…IDFVMADVDR (386 aa)) form an NADH dehydrogenase I subunit D region.

In the N-terminal section; belongs to the complex I 30 kDa subunit family. The protein in the C-terminal section; belongs to the complex I 49 kDa subunit family. NDH-1 is composed of 13 different subunits. Subunits NuoB, CD, E, F, and G constitute the peripheral sector of the complex.

Its subcellular location is the cell inner membrane. The catalysed reaction is a quinone + NADH + 5 H(+)(in) = a quinol + NAD(+) + 4 H(+)(out). Functionally, NDH-1 shuttles electrons from NADH, via FMN and iron-sulfur (Fe-S) centers, to quinones in the respiratory chain. The immediate electron acceptor for the enzyme in this species is believed to be ubiquinone. Couples the redox reaction to proton translocation (for every two electrons transferred, four hydrogen ions are translocated across the cytoplasmic membrane), and thus conserves the redox energy in a proton gradient. The protein is NADH-quinone oxidoreductase subunit C/D of Azotobacter vinelandii (strain DJ / ATCC BAA-1303).